The primary structure comprises 529 residues: Peptide chain release factor 3 (529 aa).

The tr-type G domain maps to 11 to 280; sequence AKRRTFAIIS…GLVEWAPAPM (270 aa). Residues 20 to 27, 88 to 92, and 142 to 145 each bind GTP; these read SHPDAGKT, DTPGH, and NKLD.

It belongs to the TRAFAC class translation factor GTPase superfamily. Classic translation factor GTPase family. PrfC subfamily.

The protein resides in the cytoplasm. Increases the formation of ribosomal termination complexes and stimulates activities of RF-1 and RF-2. It binds guanine nucleotides and has strong preference for UGA stop codons. It may interact directly with the ribosome. The stimulation of RF-1 and RF-2 is significantly reduced by GTP and GDP, but not by GMP. The chain is Peptide chain release factor 3 from Yersinia pestis bv. Antiqua (strain Antiqua).